The sequence spans 137 residues: Histone H2B (137 aa).

The span at 1-10 (MPPKAADKKP) shows a compositional bias: basic and acidic residues. The tract at residues 1–45 (MPPKAADKKPANKAPATASKAPEKKDAGKKTAASGEKKKRTKARK) is disordered. 2 positions are modified to N6-acetyllysine; alternate: Lys-8 and Lys-9. Glycyl lysine isopeptide (Lys-Gly) (interchain with G-Cter in SUMO); alternate cross-links involve residues Lys-8 and Lys-9. Lys-13 carries the N6-acetyllysine modification. Residue Lys-24 is modified to N6-acetyllysine; alternate. Lys-24 is covalently cross-linked (Glycyl lysine isopeptide (Lys-Gly) (interchain with G-Cter in SUMO); alternate). Lys-25 is covalently cross-linked (Glycyl lysine isopeptide (Lys-Gly) (interchain with G-Cter in SUMO)). Lys-131 is covalently cross-linked (Glycyl lysine isopeptide (Lys-Gly) (interchain with G-Cter in ubiquitin)).

This sequence belongs to the histone H2B family. In terms of assembly, the nucleosome is a histone octamer containing two molecules each of H2A, H2B, H3 and H4 assembled in one H3-H4 heterotetramer and two H2A-H2B heterodimers. The octamer wraps approximately 147 bp of DNA. In terms of processing, monoubiquitinated to form H2BK123ub1. H2BK123ub1 gives a specific tag for epigenetic transcriptional activation and is also prerequisite for H3K4me and H3K79me formation. H2BK123ub1 also modulates the formation of double-strand breaks during meiosis and is a prerequisite for DNA-damage checkpoint activation. Post-translationally, acetylated by GCN5 to form H2BK11ac and H2BK16ac. H2BK16ac can also be formed by ESA1. Acetylation of N-terminal lysines and particularly formation of H2BK11acK16ac has a positive effect on transcription. Sumoylation to form H2BK6su or H2BK7su, and probably also H2BK16su or H2BK17su, occurs preferentially near the telomeres and represses gene transcription.

It localises to the nucleus. It is found in the chromosome. Functionally, core component of nucleosome. Nucleosomes wrap and compact DNA into chromatin, limiting DNA accessibility to the cellular machineries which require DNA as a template. Histones thereby play a central role in transcription regulation, DNA repair, DNA replication and chromosomal stability. DNA accessibility is regulated via a complex set of post-translational modifications of histones, also called histone code, and nucleosome remodeling. The protein is Histone H2B (HTB1) of Podospora anserina (Pleurage anserina).